The sequence spans 426 residues: Vitamin D3 receptor (426 aa).

Residues 21-96 (PRICGVCGDR…IGMMKEFILT (76 aa)) constitute a DNA-binding region (nuclear receptor). The Zn(2+) site is built by Cys24, Cys27, Cys41, Cys44, Cys60, Cys66, Cys76, and Cys79. 2 NR C4-type zinc fingers span residues 24 to 44 (CGVC…CEGC) and 60 to 84 (CPFN…LKRC). The interval 97–126 (DEEVQRKREMILKRKEEEALKDSLRPKLSE) is hinge. Residues 127-422 (EQQRIITTLL…LTPLLFEVFG (296 aa)) enclose the NR LBD domain. Tyr143 contributes to the calcitriol binding site. The interval 147–215 (YSDFSQFRPP…NEEDSDDPSV (69 aa)) is disordered. Low complexity predominate over residues 175–191 (SFSGNSSSSCSDHCTSS). A compositionally biased stretch (polar residues) spans 192–204 (PDTMEPTSFSNQD). Residue Ser235 coordinates calcitriol. The tract at residues 244 to 262 (KMIPGFRDLTPEDQIVLLK) is interaction with coactivator LXXLL motif. Residues Arg272, Ser276, His304, and His396 each coordinate calcitriol. The 9aaTAD signature appears at 415–423 (PLLFEVFGN).

Belongs to the nuclear hormone receptor family. NR1 subfamily. Homodimer in the absence of bound vitamin D3. Heterodimer with RXRA after vitamin D3 binding. Interacts with MED1, NCOA1, NCOA2, NCOA3 and NCOA6 coactivators, leading to a strong increase of transcription of target genes. Interacts with the corepressor NCOR1. Interacts with SNW1. Interacts with IRX4, the interaction does not affect its transactivation activity. Interacts with CRY1. Interacts with CRY2 in a ligand-dependent manner. Post-translationally, ubiquitinated by UBR5, leading to its degradation: UBR5 specifically recognizes and binds ligand-bound VDR when it is not associated with coactivators (NCOAs). In presence of NCOAs, the UBR5-degron is not accessible, preventing its ubiquitination and degradation. In terms of tissue distribution, mammary gland, expression increases during lactation. Also found in colon, expression is down-regulated at parturition.

The protein resides in the nucleus. It is found in the cytoplasm. In terms of biological role, nuclear receptor for calcitriol, the active form of vitamin D3 which mediates the action of this vitamin on cells. Enters the nucleus upon vitamin D3 binding where it forms heterodimers with the retinoid X receptor/RXR. The VDR-RXR heterodimers bind to specific response elements on DNA and activate the transcription of vitamin D3-responsive target genes. Plays a central role in calcium homeostasis. Also functions as a receptor for the secondary bile acid lithocholic acid (LCA) and its metabolites. The polypeptide is Vitamin D3 receptor (VDR) (Bos taurus (Bovine)).